The sequence spans 146 residues: Hemoglobin cathodic subunit beta (146 aa).

Positions 2–146 (EWSSSERSTI…LIHALSRQYF (145 aa)) constitute a Globin domain. H63 and H92 together coordinate heme b.

It belongs to the globin family. In terms of assembly, heterotetramer of two alpha chains and two beta chains. As to expression, red blood cells.

Functionally, involved in oxygen transport from gills to the various peripheral tissues. This chain is Hemoglobin cathodic subunit beta, found in Gymnothorax unicolor (Brown moray).